A 474-amino-acid polypeptide reads, in one-letter code: Aspartyl/glutamyl-tRNA(Asn/Gln) amidotransferase subunit B (474 aa).

It belongs to the GatB/GatE family. GatB subfamily. As to quaternary structure, heterotrimer of A, B and C subunits.

The enzyme catalyses L-glutamyl-tRNA(Gln) + L-glutamine + ATP + H2O = L-glutaminyl-tRNA(Gln) + L-glutamate + ADP + phosphate + H(+). It carries out the reaction L-aspartyl-tRNA(Asn) + L-glutamine + ATP + H2O = L-asparaginyl-tRNA(Asn) + L-glutamate + ADP + phosphate + 2 H(+). Its function is as follows. Allows the formation of correctly charged Asn-tRNA(Asn) or Gln-tRNA(Gln) through the transamidation of misacylated Asp-tRNA(Asn) or Glu-tRNA(Gln) in organisms which lack either or both of asparaginyl-tRNA or glutaminyl-tRNA synthetases. The reaction takes place in the presence of glutamine and ATP through an activated phospho-Asp-tRNA(Asn) or phospho-Glu-tRNA(Gln). This is Aspartyl/glutamyl-tRNA(Asn/Gln) amidotransferase subunit B from Methanospirillum hungatei JF-1 (strain ATCC 27890 / DSM 864 / NBRC 100397 / JF-1).